Here is a 946-residue protein sequence, read N- to C-terminus: Bifunctional glutamine synthetase adenylyltransferase/adenylyl-removing enzyme (946 aa).

The tract at residues 1–440 (MKPLSSPLQQ…VFNELIGDDE (440 aa)) is adenylyl removase. Residues 449–946 (SEQWRELWQD…ASWQKWLVEE (498 aa)) are adenylyl transferase.

Belongs to the GlnE family. It depends on Mg(2+) as a cofactor.

The catalysed reaction is [glutamine synthetase]-O(4)-(5'-adenylyl)-L-tyrosine + phosphate = [glutamine synthetase]-L-tyrosine + ADP. It catalyses the reaction [glutamine synthetase]-L-tyrosine + ATP = [glutamine synthetase]-O(4)-(5'-adenylyl)-L-tyrosine + diphosphate. Functionally, involved in the regulation of glutamine synthetase GlnA, a key enzyme in the process to assimilate ammonia. When cellular nitrogen levels are high, the C-terminal adenylyl transferase (AT) inactivates GlnA by covalent transfer of an adenylyl group from ATP to specific tyrosine residue of GlnA, thus reducing its activity. Conversely, when nitrogen levels are low, the N-terminal adenylyl removase (AR) activates GlnA by removing the adenylyl group by phosphorolysis, increasing its activity. The regulatory region of GlnE binds the signal transduction protein PII (GlnB) which indicates the nitrogen status of the cell. The protein is Bifunctional glutamine synthetase adenylyltransferase/adenylyl-removing enzyme of Escherichia coli O9:H4 (strain HS).